The chain runs to 54 residues: Light-harvesting protein B-870 beta chain (54 aa).

The Cytoplasmic portion of the chain corresponds to 1-20 (EVKQESLSGITEGEAKEFHK). His-19 and His-37 together coordinate a bacteriochlorophyll. Residues 21–43 (IFTSSILVFFGVAAFAHLLVWIW) traverse the membrane as a helical segment. The Periplasmic portion of the chain corresponds to 44-54 (RPWVPGPNGYS).

Belongs to the antenna complex beta subunit family. In terms of assembly, the core complex is formed by different alpha and beta chains, binding bacteriochlorophyll molecules, and arranged most probably in tetrameric structures disposed around the reaction center. The non-pigmented gamma chains may constitute additional components.

It localises to the cell inner membrane. Antenna complexes are light-harvesting systems, which transfer the excitation energy to the reaction centers. This chain is Light-harvesting protein B-870 beta chain, found in Rhodospirillum rubrum.